The primary structure comprises 226 residues: MTIILTNDDGIDAPGIKALAQAVSGKNFIVAAPRDHQSGCGHQVTTTRPINLQRRSDSEYAIAGTPADCIRIAITQISQDVKFVLSGINAGGNLGVDAYISGTVAAVREAAMHGIAGVAISHYRKAKQNFDWELAAKWTAEVLEELLHRPLEPGYFWNVNLPHLQPGETQPELVFCQPCTKPLPANYRIDGDDFYYVGEYGKRERTPGSDVDVCFTGNIAITQLRV.

Residues Asp-8, Asp-9, Ser-38, and Asn-89 each contribute to the a divalent metal cation site.

It belongs to the SurE nucleotidase family. It depends on a divalent metal cation as a cofactor.

The protein resides in the cytoplasm. The enzyme catalyses a ribonucleoside 5'-phosphate + H2O = a ribonucleoside + phosphate. Nucleotidase that shows phosphatase activity on nucleoside 5'-monophosphates. The sequence is that of Putative 5'-nucleotidase alr3139 from Nostoc sp. (strain PCC 7120 / SAG 25.82 / UTEX 2576).